Consider the following 408-residue polypeptide: Exodeoxyribonuclease 7 large subunit (408 aa).

Belongs to the XseA family. In terms of assembly, heterooligomer composed of large and small subunits.

It localises to the cytoplasm. The catalysed reaction is Exonucleolytic cleavage in either 5'- to 3'- or 3'- to 5'-direction to yield nucleoside 5'-phosphates.. Its function is as follows. Bidirectionally degrades single-stranded DNA into large acid-insoluble oligonucleotides, which are then degraded further into small acid-soluble oligonucleotides. This is Exodeoxyribonuclease 7 large subunit from Alkaliphilus oremlandii (strain OhILAs) (Clostridium oremlandii (strain OhILAs)).